We begin with the raw amino-acid sequence, 392 residues long: NADH-quinone oxidoreductase subunit D (392 aa).

This sequence belongs to the complex I 49 kDa subunit family. As to quaternary structure, NDH-1 is composed of 14 different subunits. Subunits NuoB, C, D, E, F, and G constitute the peripheral sector of the complex.

It is found in the cell inner membrane. The enzyme catalyses a quinone + NADH + 5 H(+)(in) = a quinol + NAD(+) + 4 H(+)(out). Its function is as follows. NDH-1 shuttles electrons from NADH, via FMN and iron-sulfur (Fe-S) centers, to quinones in the respiratory chain. The immediate electron acceptor for the enzyme in this species is believed to be ubiquinone. Couples the redox reaction to proton translocation (for every two electrons transferred, four hydrogen ions are translocated across the cytoplasmic membrane), and thus conserves the redox energy in a proton gradient. This chain is NADH-quinone oxidoreductase subunit D, found in Paramagnetospirillum magneticum (strain ATCC 700264 / AMB-1) (Magnetospirillum magneticum).